Reading from the N-terminus, the 161-residue chain is PTS system glucose-specific EIIA component (161 aa).

Positions 31–135 (DPVFSKKIVG…SILTPVVISN (105 aa)) constitute a PTS EIIA type-1 domain. Histidine 68 and histidine 83 together coordinate Zn(2+). Residue histidine 83 is the Tele-phosphohistidine intermediate; for EIIA activity of the active site. Histidine 83 carries the post-translational modification Phosphohistidine; by HPr.

Zn(2+) serves as cofactor.

The protein resides in the cytoplasm. Functionally, the phosphoenolpyruvate-dependent sugar phosphotransferase system (sugar PTS), a major carbohydrate active transport system, catalyzes the phosphorylation of incoming sugar substrates concomitantly with their translocation across the cell membrane. The enzyme II complex composed of PtsG and Crr is involved in glucose transport. The polypeptide is PTS system glucose-specific EIIA component (crr) (Buchnera aphidicola subsp. Acyrthosiphon pisum (strain APS) (Acyrthosiphon pisum symbiotic bacterium)).